A 344-amino-acid polypeptide reads, in one-letter code: Uroporphyrinogen decarboxylase (344 aa).

Residues 26–30, D76, Y151, S206, and H321 each bind substrate; that span reads RQAGR.

The protein belongs to the uroporphyrinogen decarboxylase family. Homodimer.

Its subcellular location is the cytoplasm. The catalysed reaction is uroporphyrinogen III + 4 H(+) = coproporphyrinogen III + 4 CO2. Its pathway is porphyrin-containing compound metabolism; protoporphyrin-IX biosynthesis; coproporphyrinogen-III from 5-aminolevulinate: step 4/4. Functionally, catalyzes the decarboxylation of four acetate groups of uroporphyrinogen-III to yield coproporphyrinogen-III. This Sinorhizobium fredii (strain NBRC 101917 / NGR234) protein is Uroporphyrinogen decarboxylase.